A 20-amino-acid chain; its full sequence is Toxin CpTx-4a (20 aa).

Belongs to the spider toxin CSTX family. As to expression, expressed by the venom gland.

The protein resides in the secreted. Spider venom toxin that exhibits cytolytic activity by forming an alpha-helix across the membrane. Lethal to insect larvae. In Cheiracanthium punctorium (Yellow sac spider), this protein is Toxin CpTx-4a.